The following is a 173-amino-acid chain: Crossover junction endodeoxyribonuclease RuvC (173 aa).

Catalysis depends on residues D8, E69, and D141. Mg(2+) contacts are provided by D8, E69, and D141.

Belongs to the RuvC family. In terms of assembly, homodimer which binds Holliday junction (HJ) DNA. The HJ becomes 2-fold symmetrical on binding to RuvC with unstacked arms; it has a different conformation from HJ DNA in complex with RuvA. In the full resolvosome a probable DNA-RuvA(4)-RuvB(12)-RuvC(2) complex forms which resolves the HJ. Mg(2+) is required as a cofactor.

Its subcellular location is the cytoplasm. The catalysed reaction is Endonucleolytic cleavage at a junction such as a reciprocal single-stranded crossover between two homologous DNA duplexes (Holliday junction).. Functionally, the RuvA-RuvB-RuvC complex processes Holliday junction (HJ) DNA during genetic recombination and DNA repair. Endonuclease that resolves HJ intermediates. Cleaves cruciform DNA by making single-stranded nicks across the HJ at symmetrical positions within the homologous arms, yielding a 5'-phosphate and a 3'-hydroxyl group; requires a central core of homology in the junction. The consensus cleavage sequence is 5'-(A/T)TT(C/G)-3'. Cleavage occurs on the 3'-side of the TT dinucleotide at the point of strand exchange. HJ branch migration catalyzed by RuvA-RuvB allows RuvC to scan DNA until it finds its consensus sequence, where it cleaves and resolves the cruciform DNA. This is Crossover junction endodeoxyribonuclease RuvC from Xylella fastidiosa (strain Temecula1 / ATCC 700964).